The following is a 343-amino-acid chain: Pyridoxal 5'-phosphate synthase subunit PDX1 (343 aa).

D73 is a D-ribose 5-phosphate binding site. K130 serves as the catalytic Schiff-base intermediate with D-ribose 5-phosphate. A D-ribose 5-phosphate-binding site is contributed by G202. Position 214 (Q214) interacts with D-glyceraldehyde 3-phosphate. D-ribose 5-phosphate contacts are provided by residues G263 and G284–S285.

Belongs to the PdxS/SNZ family.

The enzyme catalyses aldehydo-D-ribose 5-phosphate + D-glyceraldehyde 3-phosphate + L-glutamine = pyridoxal 5'-phosphate + L-glutamate + phosphate + 3 H2O + H(+). It functions in the pathway cofactor biosynthesis; pyridoxal 5'-phosphate biosynthesis. In terms of biological role, catalyzes the formation of pyridoxal 5'-phosphate from ribose 5-phosphate (RBP), glyceraldehyde 3-phosphate (G3P) and ammonia. The ammonia is provided by PDX2. Can also use ribulose 5-phosphate and dihydroxyacetone phosphate as substrates, resulting from enzyme-catalyzed isomerization of RBP and G3P, respectively. Also plays an indirect role in resistance to singlet oxygen-generating photosensitizers. The chain is Pyridoxal 5'-phosphate synthase subunit PDX1 (PDX1) from Cercospora nicotianae (Barn spot disease fungus).